The following is a 338-amino-acid chain: Anthranilate phosphoribosyltransferase (338 aa).

5-phospho-alpha-D-ribose 1-diphosphate-binding positions include Gly78, 81-82, Ser86, 88-91, 106-114, and Ser118; these read GD, NIST, and KHGNRSITS. An anthranilate-binding site is contributed by Gly78. Position 90 (Ser90) interacts with Mg(2+). An anthranilate-binding site is contributed by Asn109. Arg163 serves as a coordination point for anthranilate. Positions 222 and 223 each coordinate Mg(2+).

Belongs to the anthranilate phosphoribosyltransferase family. Homodimer. The cofactor is Mg(2+).

The enzyme catalyses N-(5-phospho-beta-D-ribosyl)anthranilate + diphosphate = 5-phospho-alpha-D-ribose 1-diphosphate + anthranilate. It functions in the pathway amino-acid biosynthesis; L-tryptophan biosynthesis; L-tryptophan from chorismate: step 2/5. Catalyzes the transfer of the phosphoribosyl group of 5-phosphorylribose-1-pyrophosphate (PRPP) to anthranilate to yield N-(5'-phosphoribosyl)-anthranilate (PRA). This chain is Anthranilate phosphoribosyltransferase, found in Staphylococcus haemolyticus (strain JCSC1435).